The primary structure comprises 289 residues: Acetyl-coenzyme A carboxylase carboxyl transferase subunit beta (289 aa).

Residues 27 to 289 (LWSKCPSCES…SFMRVPAGAA (263 aa)) enclose the CoA carboxyltransferase N-terminal domain. Residues C31, C34, C50, and C53 each coordinate Zn(2+). The C4-type zinc finger occupies 31-53 (CPSCESVLYRTDLESNSEVCPKC).

It belongs to the AccD/PCCB family. Acetyl-CoA carboxylase is a heterohexamer composed of biotin carboxyl carrier protein (AccB), biotin carboxylase (AccC) and two subunits each of ACCase subunit alpha (AccA) and ACCase subunit beta (AccD). Zn(2+) serves as cofactor.

The protein localises to the cytoplasm. It catalyses the reaction N(6)-carboxybiotinyl-L-lysyl-[protein] + acetyl-CoA = N(6)-biotinyl-L-lysyl-[protein] + malonyl-CoA. The protein operates within lipid metabolism; malonyl-CoA biosynthesis; malonyl-CoA from acetyl-CoA: step 1/1. Functionally, component of the acetyl coenzyme A carboxylase (ACC) complex. Biotin carboxylase (BC) catalyzes the carboxylation of biotin on its carrier protein (BCCP) and then the CO(2) group is transferred by the transcarboxylase to acetyl-CoA to form malonyl-CoA. In Methylobacillus flagellatus (strain ATCC 51484 / DSM 6875 / VKM B-1610 / KT), this protein is Acetyl-coenzyme A carboxylase carboxyl transferase subunit beta.